The chain runs to 375 residues: Succinyl-diaminopimelate desuccinylase (375 aa).

Residue His66 participates in Zn(2+) binding. Asp68 is a catalytic residue. Asp99 is a Zn(2+) binding site. The Proton acceptor role is filled by Glu133. Residues Glu134, Glu162, and His348 each coordinate Zn(2+).

It belongs to the peptidase M20A family. DapE subfamily. In terms of assembly, homodimer. It depends on Zn(2+) as a cofactor. Co(2+) is required as a cofactor.

The catalysed reaction is N-succinyl-(2S,6S)-2,6-diaminopimelate + H2O = (2S,6S)-2,6-diaminopimelate + succinate. It participates in amino-acid biosynthesis; L-lysine biosynthesis via DAP pathway; LL-2,6-diaminopimelate from (S)-tetrahydrodipicolinate (succinylase route): step 3/3. In terms of biological role, catalyzes the hydrolysis of N-succinyl-L,L-diaminopimelic acid (SDAP), forming succinate and LL-2,6-diaminopimelate (DAP), an intermediate involved in the bacterial biosynthesis of lysine and meso-diaminopimelic acid, an essential component of bacterial cell walls. The chain is Succinyl-diaminopimelate desuccinylase from Serratia proteamaculans (strain 568).